We begin with the raw amino-acid sequence, 1148 residues long: Trafficking protein particle complex subunit 9 (1148 aa).

Residues serine 566 and serine 953 each carry the phosphoserine modification.

This sequence belongs to the NIBP family. Component of the multisubunit TRAPP (transport protein particle) complex, which includes at least TRAPPC2, TRAPPC2L, TRAPPC3, TRAPPC3L, TRAPPC4, TRAPPC5, TRAPPC8, TRAPPC9, TRAPPC10, TRAPPC11 and TRAPPC12. Directly interacts with IKBKB and MAP3K14. In terms of tissue distribution, expressed at high levels in muscle and kidney and to a lower extent in brain, heart and placenta.

It is found in the golgi apparatus. It localises to the cis-Golgi network. The protein resides in the endoplasmic reticulum. Its subcellular location is the cytoplasm. Functionally, functions as an activator of NF-kappa-B through increased phosphorylation of the IKK complex. May function in neuronal cells differentiation. May play a role in vesicular transport from endoplasmic reticulum to Golgi. This Homo sapiens (Human) protein is Trafficking protein particle complex subunit 9 (TRAPPC9).